The sequence spans 406 residues: 2,3-bisphosphoglycerate-independent phosphoglycerate mutase (406 aa).

This sequence belongs to the BPG-independent phosphoglycerate mutase family. A-PGAM subfamily.

The enzyme catalyses (2R)-2-phosphoglycerate = (2R)-3-phosphoglycerate. It participates in carbohydrate degradation; glycolysis; pyruvate from D-glyceraldehyde 3-phosphate: step 3/5. Catalyzes the interconversion of 2-phosphoglycerate and 3-phosphoglycerate. The chain is 2,3-bisphosphoglycerate-independent phosphoglycerate mutase from Methanococcus maripaludis (strain C5 / ATCC BAA-1333).